The following is a 280-amino-acid chain: Digeranylgeranylglyceryl phosphate synthase (280 aa).

The next 9 helical transmembrane spans lie at 4 to 24 (AAYL…AGIL), 27 to 47 (IIAT…VLTI), 83 to 103 (LMYA…FTPL), 104 to 124 (PLAG…SFLK), 128 to 148 (LIGN…GGAI), 150 to 170 (GTQG…VMLA), 199 to 219 (ATIY…LLLY), 222 to 242 (WGAF…FGAI), and 260 to 280 (KILK…AVLL).

It belongs to the UbiA prenyltransferase family. DGGGP synthase subfamily. The cofactor is Mg(2+).

It localises to the cell membrane. It carries out the reaction sn-3-O-(geranylgeranyl)glycerol 1-phosphate + (2E,6E,10E)-geranylgeranyl diphosphate = 2,3-bis-O-(geranylgeranyl)-sn-glycerol 1-phosphate + diphosphate. It participates in membrane lipid metabolism; glycerophospholipid metabolism. In terms of biological role, prenyltransferase that catalyzes the transfer of the geranylgeranyl moiety of geranylgeranyl diphosphate (GGPP) to the C2 hydroxyl of (S)-3-O-geranylgeranylglyceryl phosphate (GGGP). This reaction is the second ether-bond-formation step in the biosynthesis of archaeal membrane lipids. This chain is Digeranylgeranylglyceryl phosphate synthase, found in Methanospirillum hungatei JF-1 (strain ATCC 27890 / DSM 864 / NBRC 100397 / JF-1).